Here is a 195-residue protein sequence, read N- to C-terminus: Imidazoleglycerol-phosphate dehydratase (195 aa).

It belongs to the imidazoleglycerol-phosphate dehydratase family.

Its subcellular location is the cytoplasm. It catalyses the reaction D-erythro-1-(imidazol-4-yl)glycerol 3-phosphate = 3-(imidazol-4-yl)-2-oxopropyl phosphate + H2O. It participates in amino-acid biosynthesis; L-histidine biosynthesis; L-histidine from 5-phospho-alpha-D-ribose 1-diphosphate: step 6/9. The chain is Imidazoleglycerol-phosphate dehydratase from Thermotoga petrophila (strain ATCC BAA-488 / DSM 13995 / JCM 10881 / RKU-1).